A 322-amino-acid polypeptide reads, in one-letter code: Ubiquitin-conjugating enzyme E2 U (322 aa).

In terms of domain architecture, UBC core spans 4–153; sequence RAYLLLQRDF…LKLFNRPLQM (150 aa). Cys89 serves as the catalytic Glycyl thioester intermediate.

It belongs to the ubiquitin-conjugating enzyme family. Autoubiquitinated in vitro in the presence of UBR5.

It carries out the reaction S-ubiquitinyl-[E1 ubiquitin-activating enzyme]-L-cysteine + [E2 ubiquitin-conjugating enzyme]-L-cysteine = [E1 ubiquitin-activating enzyme]-L-cysteine + S-ubiquitinyl-[E2 ubiquitin-conjugating enzyme]-L-cysteine.. It participates in protein modification; protein ubiquitination. Functionally, catalyzes the covalent attachment of ubiquitin to other proteins. The chain is Ubiquitin-conjugating enzyme E2 U (UBE2U) from Macaca fascicularis (Crab-eating macaque).